A 405-amino-acid chain; its full sequence is uncharacterized protein (405 aa).

12 consecutive transmembrane segments (helical) span residues 19 to 39 (IVSI…PLAV), 47 to 67 (VMGF…FATL), 85 to 105 (IVVF…TAGL), 107 to 127 (ASLP…LGIG), 156 to 176 (GIVT…FYHW), 178 to 198 (GLQA…LLAI), 224 to 244 (GMAL…ITLF), 252 to 272 (GAAF…LLFP), 283 to 303 (VAMI…VATM), 309 to 329 (IGVL…GVVA), 344 to 364 (TYTV…GLVM), and 366 to 386 (WAGV…ALLL).

This sequence belongs to the major facilitator superfamily. YhhS family.

The protein localises to the cell inner membrane. This is an uncharacterized protein from Escherichia coli O6:H1 (strain CFT073 / ATCC 700928 / UPEC).